Here is a 127-residue protein sequence, read N- to C-terminus: Small ribosomal subunit protein uS12 (127 aa).

A compositionally biased stretch (basic residues) spans 11–20 (GRKPKKKKSK). Positions 11 to 30 (GRKPKKKKSKAPALQGNPQK) are disordered. Aspartate 89 bears the 3-methylthioaspartic acid mark. The segment at 105 to 127 (AGVEGRRQSRSKYGAKRPKDQKK) is disordered. Over residues 112-127 (QSRSKYGAKRPKDQKK) the composition is skewed to basic residues.

The protein belongs to the universal ribosomal protein uS12 family. Part of the 30S ribosomal subunit. Contacts proteins S8 and S17. May interact with IF1 in the 30S initiation complex.

Its function is as follows. With S4 and S5 plays an important role in translational accuracy. In terms of biological role, interacts with and stabilizes bases of the 16S rRNA that are involved in tRNA selection in the A site and with the mRNA backbone. Located at the interface of the 30S and 50S subunits, it traverses the body of the 30S subunit contacting proteins on the other side and probably holding the rRNA structure together. The combined cluster of proteins S8, S12 and S17 appears to hold together the shoulder and platform of the 30S subunit. In Thermotoga maritima (strain ATCC 43589 / DSM 3109 / JCM 10099 / NBRC 100826 / MSB8), this protein is Small ribosomal subunit protein uS12.